The chain runs to 375 residues: Amylovoran biosynthesis protein AmsC (375 aa).

The next 9 membrane-spanning stretches (helical) occupy residues 2–22 (AIYW…LAMI), 31–51 (KILI…FAGI), 93–113 (MVLA…LLFI), 162–182 (IAFI…FIVL), 208–228 (LPLV…KKLF), 256–276 (VFGL…LYYF), 287–307 (VYIL…FSDF), 309–329 (IFGG…FAFL), and 337–357 (LLNF…NTIL).

The protein resides in the cell membrane. It functions in the pathway glycan metabolism; exopolysaccharide biosynthesis. In terms of biological role, involved in the biosynthesis of amylovoran which functions as a virulence factor. The polypeptide is Amylovoran biosynthesis protein AmsC (amsC) (Erwinia amylovora (Fire blight bacteria)).